The chain runs to 149 residues: UPF0178 protein SERP0336 (149 aa).

Belongs to the UPF0178 family.

This is UPF0178 protein SERP0336 from Staphylococcus epidermidis (strain ATCC 35984 / DSM 28319 / BCRC 17069 / CCUG 31568 / BM 3577 / RP62A).